The following is a 378-amino-acid chain: Outer membrane porin C (378 aa).

Residues 1–21 (MKVKVLSLLVPALLVAGAANA) form the signal peptide.

It belongs to the Gram-negative porin family. In terms of assembly, homotrimer.

It localises to the cell outer membrane. Forms pores that allow passive diffusion of small molecules across the outer membrane. In Salmonella typhimurium (strain LT2 / SGSC1412 / ATCC 700720), this protein is Outer membrane porin C (ompC).